A 149-amino-acid polypeptide reads, in one-letter code: D-aminoacyl-tRNA deacylase (149 aa).

The Gly-cisPro motif, important for rejection of L-amino acids signature appears at 139 to 140; the sequence is GP.

This sequence belongs to the DTD family. Homodimer.

It localises to the cytoplasm. It carries out the reaction glycyl-tRNA(Ala) + H2O = tRNA(Ala) + glycine + H(+). The catalysed reaction is a D-aminoacyl-tRNA + H2O = a tRNA + a D-alpha-amino acid + H(+). Functionally, an aminoacyl-tRNA editing enzyme that deacylates mischarged D-aminoacyl-tRNAs. Also deacylates mischarged glycyl-tRNA(Ala), protecting cells against glycine mischarging by AlaRS. Acts via tRNA-based rather than protein-based catalysis; rejects L-amino acids rather than detecting D-amino acids in the active site. By recycling D-aminoacyl-tRNA to D-amino acids and free tRNA molecules, this enzyme counteracts the toxicity associated with the formation of D-aminoacyl-tRNA entities in vivo and helps enforce protein L-homochirality. In Schizosaccharomyces pombe (strain 972 / ATCC 24843) (Fission yeast), this protein is D-aminoacyl-tRNA deacylase (dtd1).